Here is a 535-residue protein sequence, read N- to C-terminus: MSVRVLNPNAEVLNKSAALHMTINAAKGLQDVLKSNLGPKGTIKMLVGGSGDIKLTKDGNTLLKEMQIQNPTAIMIARTAVAQDDISGDGTTSTVIFIGELMKQSERCIDEGMHPRVLVDGFEIAKRATLQFLDTFKTPVVMGDEPDKEILKMVARTTLRTKLYEGLADQLTDIVVNSVLCIRKPQEPIDLFMVEIMHMRHKFDVDTRLVEGLVLDHGSRHPDMKRRAENCHILTCNVSLEYEKSEINAGFFYSNAEQREAMVTAERRSVDERVQKIIELKNKVCAGNDNSFVILNQKGIDPPSLDLLAREGIIALRRAKRRNMERLVLACGGEAVNSVDDLTPDCLGWAGLVYEHVLGEEKYTFVEQVKNPHSCTILIKGPNDHTIAQIKDAVRDGLRSVKNTLEDECVVLGAGAFEVAARQHLINEVKKTVQGRAQLGVEAFANALLVVPKTLAENAGLDTQDVIISLTSEHDKGNIVGLDLQDGEPVDPQLAGIFDNYSVKRQLINSGPVIASQLLLVDEVIRAGRNMRKPT.

It belongs to the TCP-1 chaperonin family. Heterooligomeric complex of about 850 to 900 kDa that forms two stacked rings, 12 to 16 nm in diameter.

The protein localises to the cytoplasm. Functionally, molecular chaperone; assists the folding of proteins upon ATP hydrolysis. Known to play a role, in vitro, in the folding of actin and tubulin. The polypeptide is T-complex protein 1 subunit zeta 1 (Arabidopsis thaliana (Mouse-ear cress)).